The sequence spans 381 residues: NF-kappa-B inhibitor-like protein 1 (381 aa).

Positions 1–34 (MSNPSPQVPEEEASTSVCRPKSSMASTSRRQRRE) are disordered. ANK repeat units follow at residues 64–93 (GQPP…DPAH) and 97–130 (HGDT…AMGI). Disordered stretches follow at residues 129-167 (GIKN…EWRQ) and 186-294 (GDAS…RGSL). Serine 150 carries the post-translational modification Phosphoserine. Acidic residues predominate over residues 150 to 159 (SAEEEEEDDA). Basic and acidic residues-rich tracts occupy residues 218 to 228 (REAEGSRRPPR) and 238 to 287 (QQEE…EHPR).

As to quaternary structure, interacts with CACTIN (via N-terminal domain); the interaction occurs in a proinflammatory-independent manner. Detected in different cell types including monocytes, T-cells, B-cells and hepatocytes.

It localises to the nucleus. Involved in the regulation of innate immune response. Acts as negative regulator of Toll-like receptor and interferon-regulatory factor (IRF) signaling pathways. Contributes to the negative regulation of transcriptional activation of NF-kappa-B target genes in response to endogenous proinflammatory stimuli. The chain is NF-kappa-B inhibitor-like protein 1 (NFKBIL1) from Homo sapiens (Human).